The sequence spans 444 residues: Enolase (444 aa).

The substrate site is built by His163 and Glu172. Glu215 serves as the catalytic Proton donor. 3 residues coordinate Mg(2+): Asp250, Glu300, and Asp327. 2 residues coordinate substrate: Glu300 and Asp327. The active-site Proton acceptor is Lys352. Residues 379 to 382 and Lys403 contribute to the substrate site; that span reads SHRS.

The protein belongs to the enolase family. Homodimer. It depends on Mg(2+) as a cofactor.

The protein localises to the cytoplasm. The enzyme catalyses (2R)-2-phosphoglycerate = phosphoenolpyruvate + H2O. Its pathway is carbohydrate degradation; glycolysis; pyruvate from D-glyceraldehyde 3-phosphate: step 4/5. In Mesembryanthemum crystallinum (Common ice plant), this protein is Enolase (PGH1).